Reading from the N-terminus, the 236-residue chain is Ribose-5-phosphate isomerase A (236 aa).

Substrate-binding positions include 29 to 32 (SGST), 86 to 89 (DGAD), and 99 to 102 (KGGG). Glutamate 108 acts as the Proton acceptor in catalysis. Lysine 126 lines the substrate pocket.

This sequence belongs to the ribose 5-phosphate isomerase family. In terms of assembly, homodimer.

It carries out the reaction aldehydo-D-ribose 5-phosphate = D-ribulose 5-phosphate. It participates in carbohydrate degradation; pentose phosphate pathway; D-ribose 5-phosphate from D-ribulose 5-phosphate (non-oxidative stage): step 1/1. Catalyzes the reversible conversion of ribose-5-phosphate to ribulose 5-phosphate. The protein is Ribose-5-phosphate isomerase A of Prochlorococcus marinus (strain NATL1A).